Consider the following 134-residue polypeptide: uncharacterized protein (134 aa).

Transmembrane regions (helical) follow at residues Val26–Gly46, Leu55–Val75, and Tyr101–Leu121.

It localises to the membrane. This is an uncharacterized protein from Dictyostelium discoideum (Social amoeba).